A 76-amino-acid chain; its full sequence is MRLIKAFLVQLLLLPIFFYKRFISPLTPPSCRFTPSCSSYAIEALRKYGPGKGLLLSIKRILRCHPWGGSGYDPVP.

This sequence belongs to the UPF0161 family.

Its subcellular location is the cell inner membrane. Its function is as follows. Could be involved in insertion of integral membrane proteins into the membrane. This Porphyromonas gingivalis (strain ATCC 33277 / DSM 20709 / CIP 103683 / JCM 12257 / NCTC 11834 / 2561) protein is Putative membrane protein insertion efficiency factor.